The primary structure comprises 551 residues: FGGY carbohydrate kinase domain-containing protein (551 aa).

The protein belongs to the FGGY kinase family. Expressed in kidney, lung and small intestine and to a lower extent in liver and detected in cerebrospinal fluid (at protein level).

The enzyme catalyses D-ribulose + ATP = D-ribulose 5-phosphate + ADP + H(+). It participates in carbohydrate metabolism; pentose and glucuronate interconversion. In terms of biological role, catalyzes ATP-dependent phosphorylation of D-ribulose at C-5 to form D-ribulose 5-phosphate. Postulated to function in a metabolite repair mechanism by preventing toxic accumulation of free D-ribulose formed by non-specific phosphatase activities. Alternatively, may play a role in regulating D-ribulose 5-phosphate recycling in the pentose phosphate pathway. Can phosphorylate ribitol with low efficiency. This Homo sapiens (Human) protein is FGGY carbohydrate kinase domain-containing protein.